The sequence spans 342 residues: Glycerol-3-phosphate dehydrogenase [NAD(P)+] (342 aa).

NADPH contacts are provided by Trp11, Arg33, and Lys107. Residues Lys107, Gly143, and Ser145 each contribute to the sn-glycerol 3-phosphate site. Residue Ala147 participates in NADPH binding. Positions 198, 251, 261, 262, and 263 each coordinate sn-glycerol 3-phosphate. The active-site Proton acceptor is the Lys198. Arg262 lines the NADPH pocket. NADPH-binding residues include Val286 and Glu288.

This sequence belongs to the NAD-dependent glycerol-3-phosphate dehydrogenase family.

The protein localises to the cytoplasm. The enzyme catalyses sn-glycerol 3-phosphate + NAD(+) = dihydroxyacetone phosphate + NADH + H(+). It carries out the reaction sn-glycerol 3-phosphate + NADP(+) = dihydroxyacetone phosphate + NADPH + H(+). It participates in membrane lipid metabolism; glycerophospholipid metabolism. Functionally, catalyzes the reduction of the glycolytic intermediate dihydroxyacetone phosphate (DHAP) to sn-glycerol 3-phosphate (G3P), the key precursor for phospholipid synthesis. The polypeptide is Glycerol-3-phosphate dehydrogenase [NAD(P)+] (Paracidovorax citrulli (strain AAC00-1) (Acidovorax citrulli)).